The following is a 338-amino-acid chain: tRNA (cytosine(34)-C(5))-methyltransferase, mitochondrial (338 aa).

Residues 140-146, E163, D194, and D212 each bind S-adenosyl-L-methionine; that span reads CAAPGGK. The Nucleophile role is filled by C266.

This sequence belongs to the class I-like SAM-binding methyltransferase superfamily. RsmB/NOP family.

The protein resides in the mitochondrion matrix. The catalysed reaction is cytidine(34) in mitochondrial tRNA + S-adenosyl-L-methionine = 5-methylcytidine(34) in mitochondrial tRNA + S-adenosyl-L-homocysteine + H(+). In terms of biological role, mitochondrial tRNA methyltransferase that mediates methylation of cytosine to 5-methylcytosine (m5C) at position 34 of mt-tRNA(Met). mt-tRNA(Met) methylation at cytosine(34) takes place at the wobble position of the anticodon and initiates the formation of 5-formylcytosine (f(5)c) at this position. mt-tRNA(Met) containing the f(5)c modification at the wobble position enables recognition of the AUA codon in addition to the AUG codon, expanding codon recognition in mitochondrial translation. The sequence is that of tRNA (cytosine(34)-C(5))-methyltransferase, mitochondrial from Bos taurus (Bovine).